The following is a 219-amino-acid chain: Guanylate kinase (219 aa).

Residues 15–194 (GLMFVLSSPS…AFAEVQSILK (180 aa)) form the Guanylate kinase-like domain. 22-29 (SPSGAGKT) is an ATP binding site.

Belongs to the guanylate kinase family.

The protein localises to the cytoplasm. The catalysed reaction is GMP + ATP = GDP + ADP. Essential for recycling GMP and indirectly, cGMP. This is Guanylate kinase from Bradyrhizobium diazoefficiens (strain JCM 10833 / BCRC 13528 / IAM 13628 / NBRC 14792 / USDA 110).